A 307-amino-acid chain; its full sequence is Leucine-rich repeat-containing protein 25 (307 aa).

The signal sequence occupies residues 1 to 20 (MGGPLMWALLLPLLLHQAGS). Residues 21–168 (QTSSCSVLSG…SCPSGLTKIA (148 aa)) lie on the Extracellular side of the membrane. Asn44 and Asn56 each carry an N-linked (GlcNAc...) asparagine glycan. LRR repeat units lie at residues 63–86 (SVQLLDLSANGLQRLPWSFFRDLE) and 87–110 (QLQLLIVTNNSLDFVDRALXXXGC). 3 N-linked (GlcNAc...) asparagine glycosylation sites follow: Asn95, Asn132, and Asn151. A helical membrane pass occupies residues 169 to 189 (IGALAASGSLLLVLAIAGPVL). Residues 190–307 (AWRFCRHRMD…DDEEYVVPGR (118 aa)) are Cytoplasmic-facing. The tract at residues 205–249 (TWASQDGSRSGSGRQPRYSSQGRRPKSPANTPPRSSTPDYENVFV) is disordered. The span at 211 to 226 (GSRSGSGRQPRYSSQG) shows a compositional bias: low complexity. The segment covering 232 to 243 (PANTPPRSSTPD) has biased composition (polar residues). Tyr286 is subject to Phosphotyrosine.

As to quaternary structure, interacts with RIGI. Interacts with SQSTM1. Interacts with p65/RELA; this interaction promotes the degradation of RELA through autophagy.

The protein resides in the membrane. It is found in the cytoplasm. In terms of biological role, plays a role in the inhibition of RLR-mediated type I interferon signaling pathway by targeting RIGI for autophagic degradation. Interacts specifically with ISG15-associated RIGI to promote interaction between RIGI and the autophagic cargo receptor p62/SQSTM1 to mediate RIGI degradation via selective autophagy. Plays also a role in the inhibition of NF-kappa-B signaling pathway and inflammatory response by promoting the degradation of p65/RELA. This is Leucine-rich repeat-containing protein 25 (LRRC25) from Bos taurus (Bovine).